The chain runs to 92 residues: YcgL domain-containing protein HS_0805 (92 aa).

In terms of domain architecture, YcgL spans 1–85 (MLCAIYKTKR…QQENLLEQER (85 aa)).

The chain is YcgL domain-containing protein HS_0805 from Histophilus somni (strain 129Pt) (Haemophilus somnus).